The primary structure comprises 267 residues: Ribosomal RNA small subunit methyltransferase A (267 aa).

The S-adenosyl-L-methionine site is built by Asn-18, Leu-20, Gly-45, Glu-66, Asp-91, and Asn-112.

The protein belongs to the class I-like SAM-binding methyltransferase superfamily. rRNA adenine N(6)-methyltransferase family. RsmA subfamily.

The protein resides in the cytoplasm. It catalyses the reaction adenosine(1518)/adenosine(1519) in 16S rRNA + 4 S-adenosyl-L-methionine = N(6)-dimethyladenosine(1518)/N(6)-dimethyladenosine(1519) in 16S rRNA + 4 S-adenosyl-L-homocysteine + 4 H(+). Functionally, specifically dimethylates two adjacent adenosines (A1518 and A1519) in the loop of a conserved hairpin near the 3'-end of 16S rRNA in the 30S particle. May play a critical role in biogenesis of 30S subunits. This chain is Ribosomal RNA small subunit methyltransferase A, found in Shewanella pealeana (strain ATCC 700345 / ANG-SQ1).